The following is a 185-amino-acid chain: Threonylcarbamoyl-AMP synthase (185 aa).

Residues 4-185 (SWRVQQAAQN…IATGQVMRAG (182 aa)) form the YrdC-like domain.

This sequence belongs to the SUA5 family. TsaC subfamily.

Its subcellular location is the cytoplasm. The enzyme catalyses L-threonine + hydrogencarbonate + ATP = L-threonylcarbamoyladenylate + diphosphate + H2O. Required for the formation of a threonylcarbamoyl group on adenosine at position 37 (t(6)A37) in tRNAs that read codons beginning with adenine. Catalyzes the conversion of L-threonine, HCO(3)(-)/CO(2) and ATP to give threonylcarbamoyl-AMP (TC-AMP) as the acyladenylate intermediate, with the release of diphosphate. The protein is Threonylcarbamoyl-AMP synthase of Pseudomonas syringae pv. tomato (strain ATCC BAA-871 / DC3000).